We begin with the raw amino-acid sequence, 336 residues long: MSALNKKSFLTWLKEGGIYVVLLVLLAIIIFQDPTFLSLLNLSNILTQSSVRIIIALGVAGLIVTQGTDLSAGRQVGLAAVVAATLLQSMENANKVFPEMATMPIALVILIVCAIGAVIGLVNGIIIAYLNVTPFITTLGTMIIVYGINSLYYDFVGASPISGFDSGFSTFAQGFVAMGSFRLSYITFYALIAVAFVWVLWNKTRFGKNIFAIGGNPEAAKVSGVNVALNLLMIYALSGVFYAFGGLLEAGRIGSATNNLGFMYELDAIAACVVGGVSFSGGVGTVFGVVTGVIIFTVINYGLTYIGVNPYWQYIIKGGIIIFAVALDSLKYARKK.

9 helical membrane passes run 17–37 (GIYV…PTFL), 53–73 (IIIA…LSAG), 107–127 (LVIL…GIII), 128–148 (AYLN…VYGI), 181–201 (FRLS…WVLW), 227–247 (VALN…FGGL), 257–277 (TNNL…VGGV), 279–299 (FSGG…FTVI), and 306–326 (IGVN…FAVA).

The protein belongs to the binding-protein-dependent transport system permease family. AraH/RbsC subfamily. The complex is composed of one ATP-binding protein (MglA), two transmembrane proteins (MglC) and a solute-binding protein (MglB).

The protein resides in the cell inner membrane. In terms of biological role, part of the ABC transporter complex MglABC involved in galactose/methyl galactoside import. Probably responsible for the translocation of the substrate across the membrane. The polypeptide is Galactose/methyl galactoside import permease protein MglC (mglC) (Salmonella typhimurium (strain LT2 / SGSC1412 / ATCC 700720)).